A 299-amino-acid polypeptide reads, in one-letter code: ATP phosphoribosyltransferase (299 aa).

This sequence belongs to the ATP phosphoribosyltransferase family. Long subfamily. As to quaternary structure, equilibrium between an active dimeric form, an inactive hexameric form and higher aggregates. Interconversion between the various forms is largely reversible and is influenced by the natural substrates and inhibitors of the enzyme. Mg(2+) serves as cofactor.

It is found in the cytoplasm. The catalysed reaction is 1-(5-phospho-beta-D-ribosyl)-ATP + diphosphate = 5-phospho-alpha-D-ribose 1-diphosphate + ATP. Its pathway is amino-acid biosynthesis; L-histidine biosynthesis; L-histidine from 5-phospho-alpha-D-ribose 1-diphosphate: step 1/9. Feedback inhibited by histidine. Its function is as follows. Catalyzes the condensation of ATP and 5-phosphoribose 1-diphosphate to form N'-(5'-phosphoribosyl)-ATP (PR-ATP). Has a crucial role in the pathway because the rate of histidine biosynthesis seems to be controlled primarily by regulation of HisG enzymatic activity. The sequence is that of ATP phosphoribosyltransferase from Yersinia pseudotuberculosis serotype O:1b (strain IP 31758).